A 303-amino-acid polypeptide reads, in one-letter code: Glycine--tRNA ligase alpha subunit (303 aa).

Belongs to the class-II aminoacyl-tRNA synthetase family. Tetramer of two alpha and two beta subunits.

The protein localises to the cytoplasm. It carries out the reaction tRNA(Gly) + glycine + ATP = glycyl-tRNA(Gly) + AMP + diphosphate. The polypeptide is Glycine--tRNA ligase alpha subunit (Klebsiella pneumoniae (strain 342)).